Consider the following 220-residue polypeptide: Small ribosomal subunit protein uS3 (220 aa).

The 70-residue stretch at 24–93 (IKEFLEYRLS…NPQIDVIDVS (70 aa)) folds into the KH type-2 domain.

Belongs to the universal ribosomal protein uS3 family. In terms of assembly, part of the 30S ribosomal subunit.

Its function is as follows. Binds the lower part of the 30S subunit head. This is Small ribosomal subunit protein uS3 from Pyrobaculum arsenaticum (strain DSM 13514 / JCM 11321 / PZ6).